A 314-amino-acid chain; its full sequence is MTFNQHHLLGIEELSQTEITTLLDRANVHAEAERGSRDHGHPLRGLTQINMFFENSTRTQASFEIAGKRLGADVMNMAMQTSSVKKGETLIDTALTLNAMHPDLLVVRHPHSGAVKLLADKVNCAVLNAGDGRHEHPTQALLDALTIRRAKGRLHRLNVAICGDIAHSRVARSNILLLGKMENRIRLIGTPTLMPSGVADWGVEVYDNMAEGLADCDVVMMLRLQKERMDGAFIPSEREYYHRFGLDAAKLSVAKDDAIIMHPGPMNRGVEIDGLLADDINRSVIQEQVEMGVAVRMAVMELLAENLRDRRAAA.

Residues Arg58 and Thr59 each contribute to the carbamoyl phosphate site. An L-aspartate-binding site is contributed by Lys86. Residues Arg108, His136, and Gln139 each coordinate carbamoyl phosphate. Residues Arg169 and Arg223 each contribute to the L-aspartate site. Carbamoyl phosphate is bound by residues Gly264 and Pro265.

This sequence belongs to the aspartate/ornithine carbamoyltransferase superfamily. ATCase family. In terms of assembly, heterododecamer (2C3:3R2) of six catalytic PyrB chains organized as two trimers (C3), and six regulatory PyrI chains organized as three dimers (R2).

It catalyses the reaction carbamoyl phosphate + L-aspartate = N-carbamoyl-L-aspartate + phosphate + H(+). It functions in the pathway pyrimidine metabolism; UMP biosynthesis via de novo pathway; (S)-dihydroorotate from bicarbonate: step 2/3. Its function is as follows. Catalyzes the condensation of carbamoyl phosphate and aspartate to form carbamoyl aspartate and inorganic phosphate, the committed step in the de novo pyrimidine nucleotide biosynthesis pathway. The chain is Aspartate carbamoyltransferase catalytic subunit from Jannaschia sp. (strain CCS1).